The following is a 308-amino-acid chain: Aspartate carbamoyltransferase catalytic subunit (308 aa).

Arginine 59 and threonine 60 together coordinate carbamoyl phosphate. Residue lysine 87 participates in L-aspartate binding. 3 residues coordinate carbamoyl phosphate: arginine 109, histidine 139, and glutamine 142. Residues arginine 172 and arginine 224 each contribute to the L-aspartate site. Carbamoyl phosphate is bound by residues alanine 265 and proline 266.

The protein belongs to the aspartate/ornithine carbamoyltransferase superfamily. ATCase family. As to quaternary structure, heterododecamer (2C3:3R2) of six catalytic PyrB chains organized as two trimers (C3), and six regulatory PyrI chains organized as three dimers (R2).

The catalysed reaction is carbamoyl phosphate + L-aspartate = N-carbamoyl-L-aspartate + phosphate + H(+). It participates in pyrimidine metabolism; UMP biosynthesis via de novo pathway; (S)-dihydroorotate from bicarbonate: step 2/3. Its function is as follows. Catalyzes the condensation of carbamoyl phosphate and aspartate to form carbamoyl aspartate and inorganic phosphate, the committed step in the de novo pyrimidine nucleotide biosynthesis pathway. In Streptococcus thermophilus (strain ATCC BAA-491 / LMD-9), this protein is Aspartate carbamoyltransferase catalytic subunit.